Here is a 124-residue protein sequence, read N- to C-terminus: Small ribosomal subunit protein uS12c (124 aa).

This sequence belongs to the universal ribosomal protein uS12 family. As to quaternary structure, part of the 30S ribosomal subunit.

It localises to the plastid. Functionally, with S4 and S5 plays an important role in translational accuracy. Located at the interface of the 30S and 50S subunits. This Helicosporidium sp. subsp. Simulium jonesii (Green alga) protein is Small ribosomal subunit protein uS12c (rps12).